The following is an 806-amino-acid chain: Dimethyl sulfoxide reductase DmsA (806 aa).

Positions methionine 1–alanine 35 form a signal peptide, tat-type signal. The 63-residue stretch at glutamate 47 to aspartate 109 folds into the 4Fe-4S Mo/W bis-MGD-type domain. Cysteine 54, cysteine 58, cysteine 62, and cysteine 95 together coordinate [4Fe-4S] cluster. Mo-bis(molybdopterin guanine dinucleotide) contacts are provided by residues leucine 163–methionine 167, serine 196, glutamate 236–threonine 237, isoleucine 262–aspartate 263, glycine 283–aspartate 285, tryptophan 378–glycine 379, arginine 382, asparagine 480, isoleucine 504–aspartate 505, histidine 693, histidine 699–threonine 701, asparagine 780, and glutamine 796–histidine 797. The interval arginine 786 to leucine 806 is disordered. Positions proline 795–leucine 806 are enriched in polar residues.

This sequence belongs to the prokaryotic molybdopterin-containing oxidoreductase family. As to quaternary structure, heterotrimeric enzyme composed of a catalytic heterodimer (DmsAB) and a membrane anchor protein (DmsC). [4Fe-4S] cluster is required as a cofactor. Requires Mo-bis(molybdopterin guanine dinucleotide) as cofactor. Post-translationally, predicted to be exported by the Tat system. The position of the signal peptide cleavage has not been experimentally proven.

It is found in the cell membrane. It carries out the reaction dimethyl sulfide + a menaquinone + H2O = dimethyl sulfoxide + a menaquinol. Its function is as follows. Catalyzes the reduction of dimethyl sulfoxide (DMSO) to dimethyl sulfide (DMS). The terminal DMSO reductase can also use various sulfoxides and N-oxide compounds as terminal electron acceptor in addition to DMSO. The sequence is that of Dimethyl sulfoxide reductase DmsA (dmsA) from Haemophilus influenzae (strain ATCC 51907 / DSM 11121 / KW20 / Rd).